A 146-amino-acid polypeptide reads, in one-letter code: 3-dehydroquinate dehydratase (146 aa).

The active-site Proton acceptor is Tyr-24. Substrate-binding residues include Asn-75, His-81, and Asp-88. His-101 acts as the Proton donor in catalysis. Residues 102–103 (LS) and Arg-112 each bind substrate.

This sequence belongs to the type-II 3-dehydroquinase family. Homododecamer.

It carries out the reaction 3-dehydroquinate = 3-dehydroshikimate + H2O. It functions in the pathway metabolic intermediate biosynthesis; chorismate biosynthesis; chorismate from D-erythrose 4-phosphate and phosphoenolpyruvate: step 3/7. Its function is as follows. Catalyzes a trans-dehydration via an enolate intermediate. The polypeptide is 3-dehydroquinate dehydratase (Caulobacter vibrioides (strain ATCC 19089 / CIP 103742 / CB 15) (Caulobacter crescentus)).